We begin with the raw amino-acid sequence, 529 residues long: Probable serine/threonine protein phosphatase 2A regulatory subunit B''epsilon (529 aa).

The interval 60–110 (KSGTPTNKSKNLPSVFLSSSTPPLSPRSSSGSPRFSRQRTSPPSLHSPLRS) is disordered. The span at 71–109 (LPSVFLSSSTPPLSPRSSSGSPRFSRQRTSPPSLHSPLR) shows a compositional bias: low complexity. The 36-residue stretch at 381–416 (SSEPSLEYWFKCVDLDGNGVITSNEMQFFFEEQLHR) folds into the EF-hand domain. Residues aspartate 394, aspartate 396, asparagine 398, and glutamate 405 each contribute to the Ca(2+) site. Residues 507-529 (EEDVDEVSNGSADVWDEPLEPPF) form a disordered region. Over residues 520 to 529 (VWDEPLEPPF) the composition is skewed to acidic residues.

PP2A consists of a common heterodimeric core enzyme, composed of a 36 kDa catalytic subunit (subunit C) and a 65 kDa constant regulatory subunit (PR65 or subunit A), that associates with a variety of regulatory subunits. Proteins that associate with the core dimer include three families of regulatory subunits B (the R2/B/PR55/B55, R3/B''/PR72/PR130/PR59 and R5/B'/B56 families) and cell signaling molecules.

Probable regulatory subunit of type 2A protein phosphatase. In Arabidopsis thaliana (Mouse-ear cress), this protein is Probable serine/threonine protein phosphatase 2A regulatory subunit B''epsilon (B''EPSILON).